Reading from the N-terminus, the 339-residue chain is GTPase Obg (339 aa).

The Obg domain maps to 1-159 (MKFVDEAFVR…RELKLELKLL (159 aa)). Positions 127-147 (NTHFKSSTNRAPRRTTSGEEG) are disordered. The OBG-type G domain occupies 160-333 (ADVGLLGLPN…LCYDLMSFLE (174 aa)). GTP-binding positions include 166–173 (GLPNAGKS), 191–195 (FTTLY), 213–216 (DIPG), 283–286 (NKID), and 314–316 (SAI). Positions 173 and 193 each coordinate Mg(2+).

This sequence belongs to the TRAFAC class OBG-HflX-like GTPase superfamily. OBG GTPase family. In terms of assembly, monomer. Mg(2+) is required as a cofactor.

The protein localises to the cytoplasm. Functionally, an essential GTPase which binds GTP, GDP and possibly (p)ppGpp with moderate affinity, with high nucleotide exchange rates and a fairly low GTP hydrolysis rate. Plays a role in control of the cell cycle, stress response, ribosome biogenesis and in those bacteria that undergo differentiation, in morphogenesis control. The sequence is that of GTPase Obg from Coxiella burnetii (strain CbuK_Q154) (Coxiella burnetii (strain Q154)).